Reading from the N-terminus, the 84-residue chain is Cryptic plasmid protein A (84 aa).

This Neisseria gonorrhoeae protein is Cryptic plasmid protein A (cppA).